The sequence spans 66 residues: Alpha-conotoxin-like Tx2 (66 aa).

The N-terminal stretch at 1-21 (MGMRMMFTVFLLVVLATTVVS) is a signal peptide. Residues 22 to 49 (FTSGRRTFHGRNAAAKASGLVSLTDRRP) constitute a propeptide that is removed on maturation. Intrachain disulfides connect C51-C57 and C52-C65. Residues 53–55 (SHP) are ser-Xaa-Pro motif, crucial for potent interaction with nAChR.

This sequence belongs to the conotoxin A superfamily. In terms of tissue distribution, expressed by the venom duct.

Its subcellular location is the secreted. Its function is as follows. Alpha-conotoxins act on postsynaptic membranes, they bind to the nicotinic acetylcholine receptors (nAChR) and thus inhibit them. This chain is Alpha-conotoxin-like Tx2, found in Conus textile (Cloth-of-gold cone).